The following is a 414-amino-acid chain: Serine hydroxymethyltransferase (414 aa).

(6S)-5,6,7,8-tetrahydrofolate contacts are provided by residues L118 and 122–124; that span reads GHL. N6-(pyridoxal phosphate)lysine is present on K227. Residues E240 and 350–352 contribute to the (6S)-5,6,7,8-tetrahydrofolate site; that span reads SPF.

The protein belongs to the SHMT family. Homodimer. Requires pyridoxal 5'-phosphate as cofactor.

Its subcellular location is the cytoplasm. It catalyses the reaction (6R)-5,10-methylene-5,6,7,8-tetrahydrofolate + glycine + H2O = (6S)-5,6,7,8-tetrahydrofolate + L-serine. It participates in one-carbon metabolism; tetrahydrofolate interconversion. Its pathway is amino-acid biosynthesis; glycine biosynthesis; glycine from L-serine: step 1/1. Functionally, catalyzes the reversible interconversion of serine and glycine with tetrahydrofolate (THF) serving as the one-carbon carrier. This reaction serves as the major source of one-carbon groups required for the biosynthesis of purines, thymidylate, methionine, and other important biomolecules. Also exhibits THF-independent aldolase activity toward beta-hydroxyamino acids, producing glycine and aldehydes, via a retro-aldol mechanism. The protein is Serine hydroxymethyltransferase of Bacillus cereus (strain ZK / E33L).